The chain runs to 222 residues: Imidazoleglycerol-phosphate dehydratase (222 aa).

It belongs to the imidazoleglycerol-phosphate dehydratase family.

It catalyses the reaction D-erythro-1-(imidazol-4-yl)glycerol 3-phosphate = 3-(imidazol-4-yl)-2-oxopropyl phosphate + H2O. It participates in amino-acid biosynthesis; L-histidine biosynthesis; L-histidine from 5-phospho-alpha-D-ribose 1-diphosphate: step 6/9. In Scheffersomyces stipitis (strain ATCC 58785 / CBS 6054 / NBRC 10063 / NRRL Y-11545) (Yeast), this protein is Imidazoleglycerol-phosphate dehydratase (HIS3).